Consider the following 151-residue polypeptide: Large ribosomal subunit protein bL9 (151 aa).

It belongs to the bacterial ribosomal protein bL9 family.

In terms of biological role, binds to the 23S rRNA. This is Large ribosomal subunit protein bL9 from Acidobacterium capsulatum (strain ATCC 51196 / DSM 11244 / BCRC 80197 / JCM 7670 / NBRC 15755 / NCIMB 13165 / 161).